A 446-amino-acid polypeptide reads, in one-letter code: sn-2 acyl-lipid omega-3 desaturase (ferredoxin), chloroplastic (446 aa).

A chloroplast-targeting transit peptide spans 1–65 (MANLVLSECG…DGFTRNWALN (65 aa)). The next 2 helical transmembrane spans lie at 118-138 (LSYV…AAYL) and 141-161 (WIVW…LFVL). The short motif at 163–167 (HDCGH) is the Histidine box-1 element. A Histidine box-2 motif is present at residues 199-203 (HRTHH). 3 helical membrane-spanning segments follow: residues 231–250 (RFFR…YLWA), 279–299 (TACW…IGPI), and 302–322 (LKLY…VTYL). The Histidine box-3 signature appears at 366–370 (HVIHH).

The protein belongs to the fatty acid desaturase type 1 family. In terms of tissue distribution, most abundant in leaves and seedlings.

Its subcellular location is the plastid. The protein localises to the chloroplast inner membrane. The catalysed reaction is a (7Z,10Z)-hexadecadienoyl-containing glycerolipid + 2 reduced [2Fe-2S]-[ferredoxin] + O2 + 2 H(+) = a (7Z,10Z,13Z)-hexadecatrienoyl-containing glycerolipid + 2 oxidized [2Fe-2S]-[ferredoxin] + 2 H2O. The enzyme catalyses a (9Z,12Z)-octadecadienoyl-containing glycerolipid + 2 reduced [2Fe-2S]-[ferredoxin] + O2 + 2 H(+) = (9Z,12Z,15Z)-octadecatrienoyl-containing glycerolipid + 2 oxidized [2Fe-2S]-[ferredoxin] + 2 H2O. It functions in the pathway lipid metabolism; polyunsaturated fatty acid biosynthesis. Its function is as follows. Chloroplast omega-3 fatty acid desaturase introduces the third double bond in the biosynthesis of 16:3 and 18:3 fatty acids, important constituents of plant membranes. It is thought to use ferredoxin as an electron donor and to act on fatty acids esterified to galactolipids, sulfolipids and phosphatidylglycerol. The sequence is that of sn-2 acyl-lipid omega-3 desaturase (ferredoxin), chloroplastic from Arabidopsis thaliana (Mouse-ear cress).